We begin with the raw amino-acid sequence, 230 residues long: Androgen-dependent TFPI-regulating protein (230 aa).

Residues 1–7 (MTKTTTC) lie on the Cytoplasmic side of the membrane. Residues 8 to 28 (VYHFLVLNWYIFLNYHIPQIG) form a helical membrane-spanning segment. Topologically, residues 29–45 (RNEEKLREFHDGGRSKY) are extracellular. A helical transmembrane segment spans residues 46–66 (LTLLNLLLQAIFFGVACLDDV). Residues 67–85 (LKRVIGRKDIKFVTSFRDL) lie on the Cytoplasmic side of the membrane. Residues 86–106 (LFTTMAFPISTFVFLVFWTLF) traverse the membrane as a helical segment. Over 107-120 (HYDRSLVYPKGLDD) the chain is Extracellular. Residues 121–141 (FFPAWVNHAMHTSIFPFSLFE) traverse the membrane as a helical segment. Residues 142–154 (TILRPHNYPSKKL) lie on the Cytoplasmic side of the membrane. A helical membrane pass occupies residues 155–175 (GLTLLGAFNFAYIIRILWRYV). Topologically, residues 176–190 (QTGNWVYPVFDSLSP) are extracellular. The helical transmembrane segment at 191–211 (LGIIIFFSAAYILVAGIYLFG) threads the bilayer. Residues 212–230 (EKINHWKWGAIAKPQMKKN) lie on the Cytoplasmic side of the membrane.

This sequence belongs to the AIG1 family.

It is found in the cell membrane. It carries out the reaction 9-hexadecanoyloxy-octadecanoate + H2O = 9-hydroxy-octadecanoate + hexadecanoate + H(+). The catalysed reaction is 12-hexadecanoyloxy-octadecanoate + H2O = 12-hydroxyoctadecanoate + hexadecanoate + H(+). The enzyme catalyses 9-(9Z-hexadecenoyloxy)-octadecanoate + H2O = (9Z)-hexadecenoate + 9-hydroxy-octadecanoate + H(+). It catalyses the reaction 12-(9Z-hexadecenoyloxy)-octadecanoate + H2O = 12-hydroxyoctadecanoate + (9Z)-hexadecenoate + H(+). It carries out the reaction 13-(9Z-hexadecenoyloxy)-octadecanoate + H2O = 13-hydroxy-octadecanoate + (9Z)-hexadecenoate + H(+). The catalysed reaction is 9-octadecanoyloxy-octadecanoate + H2O = 9-hydroxy-octadecanoate + octadecanoate + H(+). The enzyme catalyses 12-octadecanoyloxy-octadecanoate + H2O = 12-hydroxyoctadecanoate + octadecanoate + H(+). It catalyses the reaction 13-octadecanoyloxy-octadecanoate + H2O = 13-hydroxy-octadecanoate + octadecanoate + H(+). It carries out the reaction 9-(9Z-octadecenoyloxy)-octadecanoate + H2O = 9-hydroxy-octadecanoate + (9Z)-octadecenoate + H(+). The catalysed reaction is 12-(9Z-octadecenoyloxy)-octadecanoate + H2O = 12-hydroxyoctadecanoate + (9Z)-octadecenoate + H(+). The enzyme catalyses 13-(9Z-octadecenoyloxy)-octadecanoate + H2O = 13-hydroxy-octadecanoate + (9Z)-octadecenoate + H(+). It catalyses the reaction 5-(9Z-octadecenoyloxy)-octadecanoate + H2O = 5-hydroxy-octadecanoate + (9Z)-octadecenoate + H(+). In terms of biological role, hydrolyzes bioactive fatty-acid esters of hydroxy-fatty acids (FAHFAs), but not other major classes of lipids. Shows a preference for FAHFAs with branching distal from the carboxylate head group of the lipids. Regulates the expression and the cell-associated anticoagulant activity of the inhibitor TFPI in endothelial cells (in vitro). The polypeptide is Androgen-dependent TFPI-regulating protein (Adtrp) (Mus musculus (Mouse)).